Reading from the N-terminus, the 308-residue chain is Porphobilinogen deaminase (308 aa).

S-(dipyrrolylmethanemethyl)cysteine is present on Cys-241.

Belongs to the HMBS family. In terms of assembly, monomer. The cofactor is dipyrromethane.

The catalysed reaction is 4 porphobilinogen + H2O = hydroxymethylbilane + 4 NH4(+). It participates in porphyrin-containing compound metabolism; protoporphyrin-IX biosynthesis; coproporphyrinogen-III from 5-aminolevulinate: step 2/4. Functionally, tetrapolymerization of the monopyrrole PBG into the hydroxymethylbilane pre-uroporphyrinogen in several discrete steps. The polypeptide is Porphobilinogen deaminase (Staphylococcus aureus (strain Mu50 / ATCC 700699)).